Reading from the N-terminus, the 656-residue chain is Ribosome quality control complex subunit 1 (656 aa).

Residues 1 to 11 (MSSRALRKLQR) are compositionally biased toward basic residues. Disordered stretches follow at residues 1 to 35 (MSSR…FSST), 51 to 122 (NNAI…LESS), and 634 to 656 (LFTS…GQGD). Positions 17–32 (LLEEALDSESDEDDEF) are enriched in acidic residues. Over residues 51–63 (NNAINSEAEKSVS) the composition is skewed to basic and acidic residues. S56, S61, and S63 each carry phosphoserine. Basic residues predominate over residues 83–101 (KKAKNKKKKKKQQKKKKVT). Residues 102-122 (GKRDLDNQSSDNEKLEGLESS) show a composition bias toward basic and acidic residues. Phosphoserine is present on residues S110 and S111.

Belongs to the TCF25 family. As to quaternary structure, component of the ribosome quality control complex (RQC), composed of the E3 ubiquitin ligase rkr1/ltn1, rqc1 and mtr1/rqc2, as well as cdc48 and its ubiquitin-binding cofactors. RQC forms a stable complex with 60S ribosomal subunits.

It is found in the cytoplasm. Component of the ribosome quality control complex (RQC), a ribosome-associated complex that mediates ubiquitination and extraction of incompletely synthesized nascent chains for proteasomal degradation. Within the RQC complex, rqc1 is essential for the recruitment of cdc48 to incompletely synthesized nascent polypeptides that are ubiquitinated by rkr1/ltn1. This Schizosaccharomyces pombe (strain 972 / ATCC 24843) (Fission yeast) protein is Ribosome quality control complex subunit 1.